Reading from the N-terminus, the 429-residue chain is GTPase Obg (429 aa).

The 158-residue stretch at 1-158 folds into the Obg domain; the sequence is MFVDQVKIYV…RNVQLELKVL (158 aa). The interval 124–145 is disordered; that stretch reads RGNKRFATPANPAPELSENGEP. Positions 159–329 constitute an OBG-type G domain; that stretch reads ADVGLVGFPS…LLLAIADKLE (171 aa). GTP is bound by residues 165 to 172, 190 to 194, 212 to 215, 282 to 285, and 310 to 312; these read GFPSVGKS, FTTIV, DLPG, NKMD, and SAV. Serine 172 and threonine 192 together coordinate Mg(2+). The OCT domain maps to 351 to 429; it reads KYIAEEPDFE…LLDYEFEFMD (79 aa).

Belongs to the TRAFAC class OBG-HflX-like GTPase superfamily. OBG GTPase family. In terms of assembly, monomer. Requires Mg(2+) as cofactor.

The protein resides in the cytoplasm. In terms of biological role, an essential GTPase which binds GTP, GDP and possibly (p)ppGpp with moderate affinity, with high nucleotide exchange rates and a fairly low GTP hydrolysis rate. Plays a role in control of the cell cycle, stress response, ribosome biogenesis and in those bacteria that undergo differentiation, in morphogenesis control. This chain is GTPase Obg, found in Listeria welshimeri serovar 6b (strain ATCC 35897 / DSM 20650 / CCUG 15529 / CIP 8149 / NCTC 11857 / SLCC 5334 / V8).